The primary structure comprises 407 residues: MEGIDLGNAFAQSLSGLGVPADVARALWLPLPMIVILLTVTVGVIAAVWGERKWSGMMQQRMGPTIIGLGGSIQGAADGVKLLVKEDIIPVKADPWLFTLGPAIVIIPVFFSYLVIPFGQGLVLSDITIGIFFIIAVASISPIGALMAGYASNNKYALLGGLRAAAQSISYEIPLALSVLAIVMMSSSLSTVDIVEQQETLGLFSFFSWNIWRQPIGFVIFLISALAETERAPFDLPEAESELVAGHHTEYTGMKFALFYLSEYANLILASLIASVLFLGGWSFIVPLEPLAALFGIEASNPIFQVVNALVGISVTILKATFFVFLAILARWTLPRVRIDQLLDLGWKFLLPVSLFNLLLTAALVLLSNTLKTTLPLYLPLIIFVGLVFVAMSLQKRPAAKPTAARA.

9 helical membrane-spanning segments follow: residues 28 to 48 (WLPL…IAAV), 96 to 116 (WLFT…YLVI), 127 to 147 (ITIG…GALM), 175 to 195 (LALS…VDIV), 203 to 223 (LFSF…IFLI), 267 to 287 (LILA…FIVP), 309 to 329 (ALVG…LAIL), 347 to 367 (WKFL…LVLL), and 374 to 394 (TLPL…AMSL).

It belongs to the complex I subunit 1 family. As to quaternary structure, NDH-1 is composed of at least 11 different subunits.

It localises to the cell inner membrane. It carries out the reaction a plastoquinone + NADH + (n+1) H(+)(in) = a plastoquinol + NAD(+) + n H(+)(out). The catalysed reaction is a plastoquinone + NADPH + (n+1) H(+)(in) = a plastoquinol + NADP(+) + n H(+)(out). NDH-1 shuttles electrons from an unknown electron donor, via FMN and iron-sulfur (Fe-S) centers, to quinones in the respiratory and/or the photosynthetic chain. The immediate electron acceptor for the enzyme in this species is believed to be plastoquinone. Couples the redox reaction to proton translocation, and thus conserves the redox energy in a proton gradient. This chain is NAD(P)H-quinone oxidoreductase subunit 1, found in Gloeobacter violaceus (strain ATCC 29082 / PCC 7421).